A 131-amino-acid polypeptide reads, in one-letter code: Histone H2A type 1-A (131 aa).

The disordered stretch occupies residues 1–23; it reads MSGRGKQGGKARAKSKSRSSRAG. Ser-2 carries the N-acetylserine modification. Phosphoserine; by RPS6KA5 is present on Ser-2. Citrulline; alternate is present on Arg-4. Arg-4 is modified (symmetric dimethylarginine; by PRMT5; alternate). Position 6 is an N6-(2-hydroxyisobutyryl)lysine (Lys-6). A compositionally biased stretch (basic residues) spans 7–19; the sequence is QGGKARAKSKSRS. Lys-10 carries the post-translational modification N6-(2-hydroxyisobutyryl)lysine; alternate. Lys-10 is modified (N6-(beta-hydroxybutyryl)lysine; alternate). The residue at position 10 (Lys-10) is an N6-lactoyllysine; alternate. Lys-10 bears the N6-succinyllysine; alternate mark. Lys-14 is subject to N6-(beta-hydroxybutyryl)lysine. Residues Lys-14 and Lys-16 each participate in a glycyl lysine isopeptide (Lys-Gly) (interchain with G-Cter in ubiquitin) cross-link. Position 37 is an N6-(2-hydroxyisobutyryl)lysine; alternate (Lys-37). At Lys-37 the chain carries N6-(beta-hydroxybutyryl)lysine; alternate. Lys-37 bears the N6-crotonyllysine; alternate mark. Lys-75 and Lys-76 each carry N6-(2-hydroxyisobutyryl)lysine. The residue at position 96 (Lys-96) is an N6-(2-hydroxyisobutyryl)lysine; alternate. At Lys-96 the chain carries N6-(beta-hydroxybutyryl)lysine; alternate. Lys-96 is modified (N6-succinyllysine; alternate). Lys-96 is modified (N6-glutaryllysine; alternate). Gln-105 carries the post-translational modification N5-methylglutamine. Residue Lys-119 is modified to N6-(2-hydroxyisobutyryl)lysine; alternate. The residue at position 119 (Lys-119) is an N6-(beta-hydroxybutyryl)lysine; alternate. Lys-119 and Lys-120 each carry N6-crotonyllysine; alternate. Lys-119 and Lys-120 each carry N6-glutaryllysine; alternate. Lys-120 participates in a covalent cross-link: Glycyl lysine isopeptide (Lys-Gly) (interchain with G-Cter in ubiquitin); alternate. Thr-121 carries the post-translational modification Phosphothreonine; by DCAF1. An N6-crotonyllysine modification is found at Lys-127.

It belongs to the histone H2A family. As to quaternary structure, the nucleosome is a histone octamer containing two molecules each of H2A, H2B, H3 and H4 assembled in one H3-H4 heterotetramer and two H2A-H2B heterodimers. The octamer wraps approximately 147 bp of DNA. Post-translationally, deiminated on Arg-4 in granulocytes upon calcium entry. In terms of processing, monoubiquitination of Lys-120 (H2AK119Ub) by RING1, TRIM37 and RNF2/RING2 complex gives a specific tag for epigenetic transcriptional repression and participates in X chromosome inactivation of female mammals. It is involved in the initiation of both imprinted and random X inactivation. Ubiquitinated H2A is enriched in inactive X chromosome chromatin. Ubiquitination of H2A functions downstream of methylation of 'Lys-27' of histone H3 (H3K27me). H2AK119Ub by RNF2/RING2 can also be induced by ultraviolet and may be involved in DNA repair. Monoubiquitination of Lys-120 (H2AK119Ub) by TRIM37 may promote transformation of cells in a number of breast cancers. Following DNA double-strand breaks (DSBs), it is ubiquitinated through 'Lys-63' linkage of ubiquitin moieties by the E2 ligase UBE2N and the E3 ligases RNF8 and RNF168, leading to the recruitment of repair proteins to sites of DNA damage. Ubiquitination at Lys-14 and Lys-16 (H2AK13Ub and H2AK15Ub, respectively) in response to DNA damage is initiated by RNF168 that mediates monoubiquitination at these 2 sites, and 'Lys-63'-linked ubiquitin are then conjugated to monoubiquitin; RNF8 is able to extend 'Lys-63'-linked ubiquitin chains in vitro. Deubiquitinated by USP51 at Lys-14 and Lys-16 (H2AK13Ub and H2AK15Ub, respectively) after damaged DNA is repaired. H2AK119Ub and ionizing radiation-induced 'Lys-63'-linked ubiquitination (H2AK13Ub and H2AK15Ub) are distinct events. Phosphorylation on Ser-2 (H2AS1ph) is enhanced during mitosis. Phosphorylation on Ser-2 by RPS6KA5/MSK1 directly represses transcription. Acetylation of H3 inhibits Ser-2 phosphorylation by RPS6KA5/MSK1. Phosphorylation at Thr-121 (H2AT120ph) by DCAF1 is present in the regulatory region of many tumor suppresor genes and down-regulates their transcription. Post-translationally, glutamine methylation at Gln-105 (H2AQ104me) by FBL is specifically dedicated to polymerase I. It is present at 35S ribosomal DNA locus and impairs binding of the FACT complex. In terms of processing, symmetric dimethylation on Arg-4 by the PRDM1/PRMT5 complex may play a crucial role in the germ-cell lineage. Crotonylation (Kcr) is specifically present in male germ cells and marks testis-specific genes in post-meiotic cells, including X-linked genes that escape sex chromosome inactivation in haploid cells. Crotonylation marks active promoters and enhancers and confers resistance to transcriptional repressors. It is also associated with post-meiotically activated genes on autosomes. Post-translationally, lactylated in macrophages by EP300/P300 by using lactoyl-CoA directly derived from endogenous or exogenous lactate, leading to stimulates gene transcription.

The protein localises to the nucleus. It is found in the chromosome. In terms of biological role, core component of nucleosome. Nucleosomes wrap and compact DNA into chromatin, limiting DNA accessibility to the cellular machineries which require DNA as a template. Histones thereby play a central role in transcription regulation, DNA repair, DNA replication and chromosomal stability. DNA accessibility is regulated via a complex set of post-translational modifications of histones, also called histone code, and nucleosome remodeling. The chain is Histone H2A type 1-A from Homo sapiens (Human).